The sequence spans 199 residues: Adenylyl-sulfate kinase (199 aa).

Residues 1–22 form a disordered region; sequence MSESNHITWHDSEVTKKQRQHK. 34-41 lines the ATP pocket; it reads GLSGSGKS. Catalysis depends on serine 108, which acts as the Phosphoserine intermediate.

This sequence belongs to the APS kinase family.

The enzyme catalyses adenosine 5'-phosphosulfate + ATP = 3'-phosphoadenylyl sulfate + ADP + H(+). The protein operates within sulfur metabolism; hydrogen sulfide biosynthesis; sulfite from sulfate: step 2/3. Its function is as follows. Catalyzes the synthesis of activated sulfate. The chain is Adenylyl-sulfate kinase from Staphylococcus epidermidis (strain ATCC 12228 / FDA PCI 1200).